The primary structure comprises 494 residues: 4-hydroxyphenylacetate 3-monooxygenase oxygenase component (494 aa).

Substrate is bound by residues 103-107 and His149; that span reads RSPDY. FAD contacts are provided by residues 149-151, 155-158, and Thr192; these read HTL and QMNR. 205–206 is a substrate binding site; sequence ST. Residue 455–458 participates in FAD binding; that stretch reads DPVR.

This sequence belongs to the FADH(2)-utilizing monooxygenase family. In terms of assembly, 4-HPA 3-monooxygenase consists of a reductase component HpaI and an oxygenase component HpaH.

The enzyme catalyses 4-hydroxyphenylacetate + FADH2 + O2 = 3,4-dihydroxyphenylacetate + FAD + H2O + H(+). The protein operates within aromatic compound metabolism; 4-hydroxyphenylacetate degradation; pyruvate and succinate semialdehyde from 4-hydroxyphenylacetate: step 1/7. Utilizes FADH(2) supplied by HpaI, to catalyze the hydroxylation of 4-hydroxyphenylacetic acid, leading to the production of 3,4-dihydroxyphenylacetic acid (DHPA). This Geobacillus sp. (strain PA-9) protein is 4-hydroxyphenylacetate 3-monooxygenase oxygenase component (hpaH).